The following is a 460-amino-acid chain: Chromosomal replication initiator protein DnaA (460 aa).

The segment at 1 to 84 (MAVSLWQQCI…RFDIGSRPSA (84 aa)) is domain I, interacts with DnaA modulators. The interval 84–123 (AKKPEPAPVAAVRVPNPQTKASVGTSFNTTEPVANANHRS) is domain II. Residues 124–340 (NINPTYQFDN…GALNRVIANA (217 aa)) form a domain III, AAA+ region region. Residues Gly-168, Gly-170, Lys-171, and Thr-172 each coordinate ATP. Residues 341-460 (NFTGRPITID…YANLIRTLSS (120 aa)) form a domain IV, binds dsDNA region.

It belongs to the DnaA family. As to quaternary structure, oligomerizes as a right-handed, spiral filament on DNA at oriC.

It localises to the cytoplasm. Plays an essential role in the initiation and regulation of chromosomal replication. ATP-DnaA binds to the origin of replication (oriC) to initiate formation of the DNA replication initiation complex once per cell cycle. Binds the DnaA box (a 9 base pair repeat at the origin) and separates the double-stranded (ds)DNA. Forms a right-handed helical filament on oriC DNA; dsDNA binds to the exterior of the filament while single-stranded (ss)DNA is stabiized in the filament's interior. The ATP-DnaA-oriC complex binds and stabilizes one strand of the AT-rich DNA unwinding element (DUE), permitting loading of DNA polymerase. After initiation quickly degrades to an ADP-DnaA complex that is not apt for DNA replication. Binds acidic phospholipids. The protein is Chromosomal replication initiator protein DnaA of Shewanella sp. (strain ANA-3).